A 169-amino-acid polypeptide reads, in one-letter code: MKPSSSNSRSKGHAKARRKTREELDQEARDRKRLKKRRGHAPGSRAAGGNTTSGSKGQNAPKDPRIGSKTPIPLGVAEKVTKQHKPKSEKPMLSPQAELELLETDERLDALLERLEAGETLSAEEQSWVDAKLDRIDELMQKLGLSYDDDEEEEEDEKQEDMMRLLRGN.

Disordered stretches follow at residues 1–98 and 144–169; these read MKPS…PQAE and GLSYDDDEEEEEDEKQEDMMRLLRGN. The segment covering 10-19 has biased composition (basic residues); sequence SKGHAKARRK. The segment covering 20-30 has biased composition (basic and acidic residues); it reads TREELDQEARD. Residues 31–40 show a composition bias toward basic residues; that stretch reads RKRLKKRRGH. A compositionally biased stretch (polar residues) spans 49–58; the sequence is GNTTSGSKGQ. The span at 147-159 shows a compositional bias: acidic residues; that stretch reads YDDDEEEEEDEKQ. Positions 160 to 169 are enriched in basic and acidic residues; it reads EDMMRLLRGN.

It belongs to the YihI family. Interacts with Der.

Its function is as follows. A GTPase-activating protein (GAP) that modifies Der/EngA GTPase function. May play a role in ribosome biogenesis. The chain is Der GTPase-activating protein YihI from Escherichia coli O6:K15:H31 (strain 536 / UPEC).